We begin with the raw amino-acid sequence, 514 residues long: MMTRKRPLALLILDGWGYRENTQKNAVFHANTPVLDQLTAKYPNSLISGSGIDVGLPDGQMGNSEVGHINIGSGRIVYQELTRISKAIDDGEFDTNPTLIKAIDDAIKADAAVHIMGLLSPGGVHSHQDHIEAMCRLSVKRGAKKVYLHAFLDGRDTPPRSAKPGLAHFEELFKTLGTGQVASLIGRYYAMDRDNRWDRVSQAYELITEGKGLHQATSAVEGIEAAYTRDENDEFVGSTAIPDAQGNIIKLEDNDALIFMNFRADRARQITRSFINADFDGFKRAVTPKINFVMLTEYAADIKAAIAYPSSDLVNTLGETLQNRDLTQLRISETEKYAHVTFFFNGGKEEPFKGEDRILVQSPKVATYDLQPEMSSVELTDKLVEAIESTQYDVIICNYPNGDMVGHTGNFDAAVKACEAVDSCIGRIVEALEKVGGECLITADHGNAEQMTDESTGQAHTAHTSELVPLIYVGRDAEIEKGGRLSDLAPTMLTLMGQEVPAEMTGRSIIQLKE.

Mn(2+)-binding residues include aspartate 14 and serine 64. Serine 64 (phosphoserine intermediate) is an active-site residue. Residues histidine 125, 155 to 156, arginine 187, arginine 193, 263 to 266, and lysine 336 contribute to the substrate site; these read RD and RADR. 5 residues coordinate Mn(2+): aspartate 403, histidine 407, aspartate 444, histidine 445, and histidine 463.

It belongs to the BPG-independent phosphoglycerate mutase family. In terms of assembly, monomer. It depends on Mn(2+) as a cofactor.

It carries out the reaction (2R)-2-phosphoglycerate = (2R)-3-phosphoglycerate. Its pathway is carbohydrate degradation; glycolysis; pyruvate from D-glyceraldehyde 3-phosphate: step 3/5. Catalyzes the interconversion of 2-phosphoglycerate and 3-phosphoglycerate. This is 2,3-bisphosphoglycerate-independent phosphoglycerate mutase from Shewanella halifaxensis (strain HAW-EB4).